A 470-amino-acid polypeptide reads, in one-letter code: Poly(A) polymerase catalytic subunit (470 aa).

Active-site residues include Asp-192 and Asp-194.

It belongs to the poxviridae poly(A) polymerase catalytic subunit family. As to quaternary structure, heterodimer of a large (catalytic) subunit and a small (regulatory) subunit.

The catalysed reaction is RNA(n) + ATP = RNA(n)-3'-adenine ribonucleotide + diphosphate. Polymerase that creates the 3'-poly(A) tail of mRNA's. The sequence is that of Poly(A) polymerase catalytic subunit (PAPL) from Erythrocebus patas (Red guenon).